A 255-amino-acid polypeptide reads, in one-letter code: 1-(5-phosphoribosyl)-5-[(5-phosphoribosylamino)methylideneamino] imidazole-4-carboxamide isomerase (255 aa).

Asp8 acts as the Proton acceptor in catalysis. Catalysis depends on Asp129, which acts as the Proton donor.

It belongs to the HisA/HisF family.

It is found in the cytoplasm. It carries out the reaction 1-(5-phospho-beta-D-ribosyl)-5-[(5-phospho-beta-D-ribosylamino)methylideneamino]imidazole-4-carboxamide = 5-[(5-phospho-1-deoxy-D-ribulos-1-ylimino)methylamino]-1-(5-phospho-beta-D-ribosyl)imidazole-4-carboxamide. The protein operates within amino-acid biosynthesis; L-histidine biosynthesis; L-histidine from 5-phospho-alpha-D-ribose 1-diphosphate: step 4/9. In Prochlorococcus marinus (strain MIT 9313), this protein is 1-(5-phosphoribosyl)-5-[(5-phosphoribosylamino)methylideneamino] imidazole-4-carboxamide isomerase.